A 408-amino-acid chain; its full sequence is MQVTMKSSAVSGQRVGGARVATRSVRRAQLQVVAPSRKQMGRWRSIDAGVDASDDQQDITRGREMVDDLFQGGFGAGGTHNAVLSSQEYLSQSRASFNNIEDGFYISPAFLDKMTIHIAKNFMDLPKIKVPLILGIWGGKGQGKTFQCALAYKKLGIAPIVMSAGELESGNAGEPAKLIRTRYREASDIIKKGRMCSLFINDLDAGAGRMGDTTQYTVNNQMVNATLMNIADNPTNVQLPGVYKNEEIPRVPIVCTGNDFSTLYAPLIRDGRMEKYYWNPTREDRIGVCMGIFQEDNVQRREVENLVDTFPGQSIDFFGALRARVYDDMVRQWITDTGVDKIGQQLVNARQKVAMPKVSMDLNVLIKYGKSLVDEQENVKRVQLADAYLSGAELAGHGGSSLPEAYSR.

The transit peptide at 1-32 (MQVTMKSSAVSGQRVGGARVATRSVRRAQLQV) directs the protein to the chloroplast. 138 to 145 (GGKGQGKT) is an ATP binding site.

Belongs to the RuBisCO activase family. As to quaternary structure, monomer.

It localises to the plastid. The protein resides in the chloroplast stroma. Activation of RuBisCO (ribulose-1,5-bisphosphate carboxylase/oxygenase; EC 4.1.1.39) involves the ATP-dependent carboxylation of the epsilon-amino group of lysine leading to a carbamate structure. This Chlamydomonas reinhardtii (Chlamydomonas smithii) protein is Ribulose bisphosphate carboxylase/oxygenase activase, chloroplastic.